The following is a 126-amino-acid chain: MDPHETLVKNPYAHISIPRAHLRPELGQQRKAGPSSAESRPLPVRSCTLEPLEEAPGPKGTKGRPASQQPCKPCGSGQRPAGLAYAGPPPAQRGDDIAHHCWCCPCCSCCHCPRFCRCHSCCCVVS.

Residues M1–P89 form a disordered region.

The protein belongs to the CYSRT1 family. In terms of assembly, interacts with components of the late cornfied envelope (LCE).

The protein localises to the cornified envelope. Its function is as follows. Component of the stratum corneum that may contribute to epidermal antimicrobial host defenses. This is Cysteine-rich tail protein 1 (CYSRT1) from Bos taurus (Bovine).